The chain runs to 321 residues: Lipoyl synthase (321 aa).

The [4Fe-4S] cluster site is built by Cys-68, Cys-73, Cys-79, Cys-94, Cys-98, Cys-101, and Ser-308. The 218-residue stretch at 80–297 (FNHGTATFMI…KALADELGFT (218 aa)) folds into the Radical SAM core domain.

Belongs to the radical SAM superfamily. Lipoyl synthase family. [4Fe-4S] cluster serves as cofactor.

It localises to the cytoplasm. The enzyme catalyses [[Fe-S] cluster scaffold protein carrying a second [4Fe-4S](2+) cluster] + N(6)-octanoyl-L-lysyl-[protein] + 2 oxidized [2Fe-2S]-[ferredoxin] + 2 S-adenosyl-L-methionine + 4 H(+) = [[Fe-S] cluster scaffold protein] + N(6)-[(R)-dihydrolipoyl]-L-lysyl-[protein] + 4 Fe(3+) + 2 hydrogen sulfide + 2 5'-deoxyadenosine + 2 L-methionine + 2 reduced [2Fe-2S]-[ferredoxin]. Its pathway is protein modification; protein lipoylation via endogenous pathway; protein N(6)-(lipoyl)lysine from octanoyl-[acyl-carrier-protein]: step 2/2. Functionally, catalyzes the radical-mediated insertion of two sulfur atoms into the C-6 and C-8 positions of the octanoyl moiety bound to the lipoyl domains of lipoate-dependent enzymes, thereby converting the octanoylated domains into lipoylated derivatives. The polypeptide is Lipoyl synthase (Shewanella frigidimarina (strain NCIMB 400)).